The following is a 29-amino-acid chain: Glucagon (29 aa).

This sequence belongs to the glucagon family.

Its subcellular location is the secreted. Functionally, glucagon plays a key role in glucose metabolism and homeostasis. Regulates blood glucose by increasing gluconeogenesis and decreasing glycolysis. This chain is Glucagon (gcg), found in Lampetra fluviatilis (European river lamprey).